A 156-amino-acid polypeptide reads, in one-letter code: ATP synthase subunit b (156 aa).

Residues 7–29 (LLGQAISFLLFVWFCMKFVWPPL) traverse the membrane as a helical segment.

This sequence belongs to the ATPase B chain family. F-type ATPases have 2 components, F(1) - the catalytic core - and F(0) - the membrane proton channel. F(1) has five subunits: alpha(3), beta(3), gamma(1), delta(1), epsilon(1). F(0) has three main subunits: a(1), b(2) and c(10-14). The alpha and beta chains form an alternating ring which encloses part of the gamma chain. F(1) is attached to F(0) by a central stalk formed by the gamma and epsilon chains, while a peripheral stalk is formed by the delta and b chains.

It is found in the cell inner membrane. F(1)F(0) ATP synthase produces ATP from ADP in the presence of a proton or sodium gradient. F-type ATPases consist of two structural domains, F(1) containing the extramembraneous catalytic core and F(0) containing the membrane proton channel, linked together by a central stalk and a peripheral stalk. During catalysis, ATP synthesis in the catalytic domain of F(1) is coupled via a rotary mechanism of the central stalk subunits to proton translocation. Its function is as follows. Component of the F(0) channel, it forms part of the peripheral stalk, linking F(1) to F(0). The sequence is that of ATP synthase subunit b from Shewanella pealeana (strain ATCC 700345 / ANG-SQ1).